Here is a 94-residue protein sequence, read N- to C-terminus: DNA-directed RNA polymerase subunit omega (94 aa).

This sequence belongs to the RNA polymerase subunit omega family. The RNAP catalytic core consists of 2 alpha, 1 beta, 1 beta' and 1 omega subunit. When a sigma factor is associated with the core the holoenzyme is formed, which can initiate transcription.

The enzyme catalyses RNA(n) + a ribonucleoside 5'-triphosphate = RNA(n+1) + diphosphate. Functionally, promotes RNA polymerase assembly. Latches the N- and C-terminal regions of the beta' subunit thereby facilitating its interaction with the beta and alpha subunits. This chain is DNA-directed RNA polymerase subunit omega, found in Bifidobacterium animalis subsp. lactis (strain AD011).